Reading from the N-terminus, the 87-residue chain is Large ribosomal subunit protein bL31B (87 aa).

The protein belongs to the bacterial ribosomal protein bL31 family. Type B subfamily. As to quaternary structure, part of the 50S ribosomal subunit.

In Pseudomonas paraeruginosa (strain DSM 24068 / PA7) (Pseudomonas aeruginosa (strain PA7)), this protein is Large ribosomal subunit protein bL31B.